Consider the following 440-residue polypeptide: Cysteine proteinase (440 aa).

An N-terminal signal peptide occupies residues M1–V60. Positions V61–T229 are cleaved as a propeptide — activation peptide. The involved in processing to yield active enzymes stretch occupies residues V166–K182. N206 carries an N-linked (GlcNAc...) asparagine glycan. A disulfide bond links C250 and C291. Catalysis depends on residues C253, H382, and N404.

This sequence belongs to the peptidase C1 family.

The sequence is that of Cysteine proteinase from Theileria parva (East coast fever infection agent).